Reading from the N-terminus, the 222-residue chain is WAP four-disulfide core domain protein 1 (222 aa).

The signal sequence occupies residues 1–32 (MDSRMLSDQRFCRRIFAAALCVLVLLADSGCA). Residues 61–110 (HYQKNDRCPPPPQTLPDRACEVPSCRSDSECERHKRCCYNGCIYACLESV) form the WAP domain. 4 disulfide bridges follow: cysteine 68-cysteine 98, cysteine 80-cysteine 102, cysteine 85-cysteine 97, and cysteine 91-cysteine 106.

The protein localises to the secreted. Its function is as follows. Has growth inhibitory activity. This is WAP four-disulfide core domain protein 1 (WFDC1) from Gallus gallus (Chicken).